A 358-amino-acid polypeptide reads, in one-letter code: Pseudouridylate synthase RPUSD4, mitochondrial (358 aa).

A mitochondrion-targeting transit peptide spans 1 to 12; sequence MRHAREVTFARL.

The protein belongs to the pseudouridine synthase RluA family.

The protein resides in the mitochondrion matrix. Its subcellular location is the nucleus. The protein localises to the cytoplasm. The catalysed reaction is uridine in 5S rRNA = pseudouridine in 5S rRNA. It carries out the reaction a uridine in tRNA = a pseudouridine in tRNA. The enzyme catalyses a uridine in mRNA = a pseudouridine in mRNA. Its function is as follows. Catalyzes uridine to pseudouridine isomerization (pseudouridylation) of different mitochondrial RNA substrates. Acts on position 1397 in 16S mitochondrial ribosomal RNA (16S mt-rRNA). This modification is required for the assembly of 16S mt-rRNA into a functional mitochondrial ribosome. Acts on position 39 in mitochondrial tRNA(Phe). Also catalyzes pseudouridylation of mRNAs in nucleus: acts as a regulator of pre-mRNA splicing by mediating pseudouridylation of pre-mRNAs at locations associated with alternatively spliced regions. Pseudouridylation of pre-mRNAs near splice sites directly regulates mRNA splicing and mRNA 3'-end processing. The protein is Pseudouridylate synthase RPUSD4, mitochondrial of Danio rerio (Zebrafish).